The sequence spans 253 residues: 5'/3'-nucleotidase SurE (253 aa).

4 residues coordinate a divalent metal cation: D8, D9, S39, and N92.

Belongs to the SurE nucleotidase family. A divalent metal cation is required as a cofactor.

The protein localises to the cytoplasm. The catalysed reaction is a ribonucleoside 5'-phosphate + H2O = a ribonucleoside + phosphate. It catalyses the reaction a ribonucleoside 3'-phosphate + H2O = a ribonucleoside + phosphate. The enzyme catalyses [phosphate](n) + H2O = [phosphate](n-1) + phosphate + H(+). Functionally, nucleotidase with a broad substrate specificity as it can dephosphorylate various ribo- and deoxyribonucleoside 5'-monophosphates and ribonucleoside 3'-monophosphates with highest affinity to 3'-AMP. Also hydrolyzes polyphosphate (exopolyphosphatase activity) with the preference for short-chain-length substrates (P20-25). Might be involved in the regulation of dNTP and NTP pools, and in the turnover of 3'-mononucleotides produced by numerous intracellular RNases (T1, T2, and F) during the degradation of various RNAs. This is 5'/3'-nucleotidase SurE from Erwinia tasmaniensis (strain DSM 17950 / CFBP 7177 / CIP 109463 / NCPPB 4357 / Et1/99).